The primary structure comprises 474 residues: Trehalose-6-phosphate synthase (474 aa).

A D-glucose 6-phosphate-binding site is contributed by R10. 22-23 (GG) is a binding site for UDP-alpha-D-glucose. Residues Y77 and D131 each contribute to the D-glucose 6-phosphate site. UDP-alpha-D-glucose contacts are provided by R263 and K268. Residue R301 coordinates D-glucose 6-phosphate. UDP-alpha-D-glucose contacts are provided by residues F340 and 366-370 (LVAKE).

This sequence belongs to the glycosyltransferase 20 family. Homotetramer.

The catalysed reaction is D-glucose 6-phosphate + UDP-alpha-D-glucose = alpha,alpha-trehalose 6-phosphate + UDP + H(+). It functions in the pathway glycan biosynthesis; trehalose biosynthesis. In terms of biological role, probably involved in the osmoprotection via the biosynthesis of trehalose. Catalyzes the transfer of glucose from UDP-alpha-D-glucose (UDP-Glc) to D-glucose 6-phosphate (Glc-6-P) to form trehalose-6-phosphate. Acts with retention of the anomeric configuration of the UDP-sugar donor. This is Trehalose-6-phosphate synthase from Shigella dysenteriae serotype 1 (strain Sd197).